Here is a 373-residue protein sequence, read N- to C-terminus: Histidinol-phosphate aminotransferase (373 aa).

K229 carries the N6-(pyridoxal phosphate)lysine modification.

It belongs to the class-II pyridoxal-phosphate-dependent aminotransferase family. Histidinol-phosphate aminotransferase subfamily. Pyridoxal 5'-phosphate is required as a cofactor.

The enzyme catalyses L-histidinol phosphate + 2-oxoglutarate = 3-(imidazol-4-yl)-2-oxopropyl phosphate + L-glutamate. The protein operates within amino-acid biosynthesis; L-histidine biosynthesis; L-histidine from 5-phospho-alpha-D-ribose 1-diphosphate: step 7/9. The protein is Histidinol-phosphate aminotransferase (hisC) of Methanothermobacter thermautotrophicus (strain ATCC 29096 / DSM 1053 / JCM 10044 / NBRC 100330 / Delta H) (Methanobacterium thermoautotrophicum).